Reading from the N-terminus, the 319-residue chain is Forkhead box protein B1 (319 aa).

Positions 13 to 107 (KPPYSYISLT…ENGSFLRRRK (95 aa)) form a DNA-binding region, fork-head. The interval 278–310 (LSNSSPSMSPTSPQTATSQSSPATPSDTLTNPS) is disordered. The span at 279–305 (SNSSPSMSPTSPQTATSQSSPATPSDT) shows a compositional bias: low complexity.

In terms of tissue distribution, in early gastrulae, expressed in the inner layer of the posterior dorsal ectoderm and in non-involuted mesoderm. By the mid-gastrula stage, expressed solely in the posterior ectoderm. At the end of gastrulation, expressed in ectodermal regions fated to become diencephalon, midbrain and hindbrain, and weakly expressed in regions fated to become spinal cord and tailbud. At the neurula stage, expressed in the midbrain and posterior forebrain (diencephalon) but not in the more anterior forebrain (telencephalon). Also expressed posteriorly in rhombomere 5. At tailbud stages, expression remains in the anterior brain and is also detectable along the length of the central nervous system and in the tailbud.

It is found in the nucleus. Its function is as follows. Probable transcription factor. May be involved in the early anteroposterior patterning of the neuroectoderm. This chain is Forkhead box protein B1, found in Xenopus laevis (African clawed frog).